Reading from the N-terminus, the 915-residue chain is Hexokinase HKDC1 (915 aa).

The interval 1–20 is mitochondrial-binding peptide (MBP); that stretch reads MFAVHLVAFYFTKLKEDQIK. Hexokinase domains follow at residues 16–458 and 464–903; these read EDQI…MVTA and QAQR…LITA. ATP contacts are provided by residues R30 and 84-89; that span reads DLGGSK. The hexokinase small subdomain 1 stretch occupies residues 73 to 207; it reads DGSENGEFLS…DLDVDILALV (135 aa). 84-91 contacts D-glucose 6-phosphate; that stretch reads DLGGSKFR. D-glucose contacts are provided by residues S155, 172–173, and 208–209; these read TK and ND. Positions 208–447 are hexokinase large subdomain 1; that stretch reads NDTVGTMMTC…CDVRFLLSES (240 aa). D-glucose 6-phosphate is bound by residues D209 and T232. D-glucose is bound by residues N235, E260, and 291–294; that span reads QLFE. 413-415 provides a ligand contact to D-glucose 6-phosphate; sequence DGT. 425-426 lines the ATP pocket; it reads KR. D-glucose 6-phosphate is bound by residues S449 and 532-536; that span reads DLGGT. The hexokinase small subdomain 2 stretch occupies residues 521 to 652; it reads DGTEKGKFLA…EFDLDIVAIV (132 aa). 532 to 537 lines the ATP pocket; the sequence is DLGGTN. Residues 600 to 601, 617 to 618, and 653 to 654 each bind D-glucose; these read SF, TK, and ND. A hexokinase large subdomain 2 region spans residues 653–892; the sequence is NDTVGTMMTC…CDVTFMLSED (240 aa). Residues D654 and T677 each coordinate D-glucose 6-phosphate. Position 677 (T677) interacts with ATP. D-glucose is bound by residues 679–680, E705, and E739; that span reads SN. Residues 744–745, 781–785, and 860–864 each bind ATP; these read GM, TKFLS, and TLYKL. D-glucose 6-phosphate contacts are provided by residues 858–860 and S894; that span reads DGT.

Belongs to the hexokinase family. Widely expressed. Detected in retina, brain, cerebellum, liver, lung, kidney, spleen, pancreas and intestine.

The protein localises to the cytoplasm. It is found in the mitochondrion membrane. Its subcellular location is the photoreceptor inner segment. The enzyme catalyses a D-hexose + ATP = a D-hexose 6-phosphate + ADP + H(+). It catalyses the reaction D-glucose + ATP = D-glucose 6-phosphate + ADP + H(+). Its pathway is carbohydrate metabolism; hexose metabolism. It participates in carbohydrate degradation; glycolysis; D-glyceraldehyde 3-phosphate and glycerone phosphate from D-glucose: step 1/4. Catalyzes the phosphorylation of hexose to hexose 6-phosphate, although at very low level compared to other hexokinases. Has low glucose phosphorylating activity compared to other hexokinases. Involved in glucose homeostasis and hepatic lipid accumulation. Required to maintain whole-body glucose homeostasis during pregnancy; however additional evidences are required to confirm this role. In Mus musculus (Mouse), this protein is Hexokinase HKDC1.